A 215-amino-acid polypeptide reads, in one-letter code: Probable transaldolase (215 aa).

Lys-83 (schiff-base intermediate with substrate) is an active-site residue.

The protein belongs to the transaldolase family. Type 3B subfamily.

Its subcellular location is the cytoplasm. The catalysed reaction is D-sedoheptulose 7-phosphate + D-glyceraldehyde 3-phosphate = D-erythrose 4-phosphate + beta-D-fructose 6-phosphate. It functions in the pathway carbohydrate degradation; pentose phosphate pathway; D-glyceraldehyde 3-phosphate and beta-D-fructose 6-phosphate from D-ribose 5-phosphate and D-xylulose 5-phosphate (non-oxidative stage): step 2/3. Its function is as follows. Transaldolase is important for the balance of metabolites in the pentose-phosphate pathway. This is Probable transaldolase from Anaeromyxobacter sp. (strain Fw109-5).